The following is a 161-amino-acid chain: Urocortin-3 (161 aa).

An N-terminal signal peptide occupies residues 1–21 (MLMPVHFLLLLLLLLGGPRTG). The propeptide occupies 22-118 (LPHKFYKAKP…QDTAKSPHRT (97 aa)). The disordered stretch occupies residues 64 to 118 (SRDASSGEEEEGKEKKTFPISGARGGARGTRYRYVSQAQPRGKPRQDTAKSPHRT). The residue at position 157 (Ile157) is an Isoleucine amide.

Belongs to the sauvagine/corticotropin-releasing factor/urotensin I family. In terms of assembly, binds with high affinity to CRF receptors 2-alpha and 2-beta.

The protein localises to the secreted. Its function is as follows. Suppresses food intake, delays gastric emptying and decreases heat-induced edema. Might represent an endogenous ligand for maintaining homeostasis after stress. The sequence is that of Urocortin-3 (UCN3) from Homo sapiens (Human).